Consider the following 261-residue polypeptide: Proteasome subunit alpha type-4 (261 aa).

Residues serine 13 and serine 75 each carry the phosphoserine modification. An N6-acetyllysine modification is found at lysine 127. Serine 173 carries the post-translational modification Phosphoserine. Lysine 176 is subject to N6-acetyllysine. The interval 240-261 (HEEEEAKAEREKKEKEQKEKDK) is disordered.

It belongs to the peptidase T1A family. As to quaternary structure, the 26S proteasome consists of a 20S proteasome core and two 19S regulatory subunits. The 20S proteasome core is a barrel-shaped complex made of 28 subunits that are arranged in four stacked rings. The two outer rings are each formed by seven alpha subunits, and the two inner rings are formed by seven beta subunits. The proteolytic activity is exerted by three beta-subunits PSMB5, PSMB6 and PSMB7.

The protein resides in the cytoplasm. It is found in the nucleus. Functionally, component of the 20S core proteasome complex involved in the proteolytic degradation of most intracellular proteins. This complex plays numerous essential roles within the cell by associating with different regulatory particles. Associated with two 19S regulatory particles, forms the 26S proteasome and thus participates in the ATP-dependent degradation of ubiquitinated proteins. The 26S proteasome plays a key role in the maintenance of protein homeostasis by removing misfolded or damaged proteins that could impair cellular functions, and by removing proteins whose functions are no longer required. Associated with the PA200 or PA28, the 20S proteasome mediates ubiquitin-independent protein degradation. This type of proteolysis is required in several pathways including spermatogenesis (20S-PA200 complex) or generation of a subset of MHC class I-presented antigenic peptides (20S-PA28 complex). The chain is Proteasome subunit alpha type-4 (PSMA4) from Macaca fascicularis (Crab-eating macaque).